Reading from the N-terminus, the 1433-residue chain is Probable ATP-dependent RNA helicase spindle-E (1433 aa).

The disordered stretch occupies residues 76 to 98 (NRTLDELDSDDEEENMQEQPSVR). The span at 81–91 (ELDSDDEEENM) shows a compositional bias: acidic residues. One can recognise a Helicase ATP-binding domain in the interval 127 to 294 (MKAIRENPVV…FATSSAFPPV (168 aa)). 140-147 (GETGCGKT) is an ATP binding site. The DEAH box motif lies at 240-243 (DEVH). A Helicase C-terminal domain is found at 354 to 526 (QSLQSYEEAK…NSVLKAKELE (173 aa)). In terms of domain architecture, Tudor spans 937–1000 (ASAVTKGLQL…RLMPHELKRD (64 aa)).

This sequence belongs to the DEAD box helicase family. DEAH subfamily.

It is found in the cytoplasm. It carries out the reaction ATP + H2O = ADP + phosphate + H(+). In terms of biological role, probable ATP-binding RNA helicase which plays a central role during spermatogenesis and oogenesis by repressing transposable elements and preventing their mobilization, which is essential for the germline integrity. Acts via the piRNA metabolic process, which mediates the repression of transposable elements during meiosis by forming complexes composed of piRNAs and Piwi and govern the methylation and subsequent repression of transposons. Involved in the repression of LTR retrotransposon copia. Also involved in telomere regulation by repressing specialized telomeric retroelements HeT-A, TAHRE, and TART; Drosophila telomeres being maintained by transposition of specialized telomeric retroelements. Involved in telomeric trans-silencing, a repression mechanism by which a transposon or a transgene inserted in subtelomeric heterochromatin has the capacity to repress in trans in the female germline, a homologous transposon, or transgene located in euchromatin. Involved in the repression of testis-expressed Stellate genes by the homologous Su(Ste) repeats. Required for anteroposterior and dorsoventral axis formation during oogenesis. This chain is Probable ATP-dependent RNA helicase spindle-E (spn-E), found in Drosophila virilis (Fruit fly).